Reading from the N-terminus, the 56-residue chain is Large ribosomal subunit protein bL33 (56 aa).

Belongs to the bacterial ribosomal protein bL33 family.

This Ehrlichia canis (strain Jake) protein is Large ribosomal subunit protein bL33.